The sequence spans 362 residues: MEDPNRMMGGHGGLMPPNYGMPTNDGQAGVDNDPRKQDIGEILQQIMNITDQSLDEAQARKHTLNCHRMKPVLFAVLCEIKEKTVLSLRNTQEEEPPDPQLMRLDNMLIAEGVAGPEKGGGADFLSQSDLTGGQDNAIEHSDYRAKLAQIRQIYHQELEKYEQACSEFTTHVMNLLREQSRTRPITPKEIERMVQIIHRKFSSIQMQLKQSTCEAVMILRSRFLDARRKRRNFSKQASEILNEYFYSHLSNPYPSEEAKEELARKCGITVSQVSNWFGNKRIRYKKNIGKAQEEANLYAAKKAAGASPYSMGGPPSGAATPMMSPAPAQDSMGYSLGSGGYDQQQPYDGSMGYDQLHQDLSP.

One can recognise a PBC domain in the interval 34-225 (PRKQDIGEIL…VMILRSRFLD (192 aa)). The tract at residues 41 to 120 (EILQQIMNIT…EGVAGPEKGG (80 aa)) is PBC-A. A PBC-B region spans residues 123–225 (DFLSQSDLTG…VMILRSRFLD (103 aa)). Residues 226-288 (ARRKRRNFSK…NKRIRYKKNI (63 aa)) constitute a DNA-binding region (homeobox; TALE-type). The interval 305-362 (GASPYSMGGPPSGAATPMMSPAPAQDSMGYSLGSGGYDQQQPYDGSMGYDQLHQDLSP) is disordered.

Belongs to the TALE/PBX homeobox family.

Its subcellular location is the nucleus. Transcription factor which acts with the selector homeodomain proteins altering the regulation of downstream target genes such as wingless (wg), teashirt (tsh) and decapentaplegic (dpp), thus affecting segmental identity. The sequence is that of Homeobox protein extradenticle from Anopheles gambiae (African malaria mosquito).